A 282-amino-acid chain; its full sequence is Small ribosomal subunit protein uS2 (282 aa).

Residues 245–266 form a disordered region; it reads AEEAVEELPLPTGEAQDEASSK.

This sequence belongs to the universal ribosomal protein uS2 family.

This Chlamydia trachomatis serovar D (strain ATCC VR-885 / DSM 19411 / UW-3/Cx) protein is Small ribosomal subunit protein uS2 (rpsB).